The following is a 296-amino-acid chain: NAD kinase (296 aa).

Asp-72 functions as the Proton acceptor in the catalytic mechanism. NAD(+) is bound by residues 72–73 (DG), 146–147 (ND), Arg-157, Lys-174, Asp-176, 187–192 (TAYALS), and Gln-247.

The protein belongs to the NAD kinase family. Requires a divalent metal cation as cofactor.

The protein localises to the cytoplasm. It catalyses the reaction NAD(+) + ATP = ADP + NADP(+) + H(+). Functionally, involved in the regulation of the intracellular balance of NAD and NADP, and is a key enzyme in the biosynthesis of NADP. Catalyzes specifically the phosphorylation on 2'-hydroxyl of the adenosine moiety of NAD to yield NADP. In Pseudomonas savastanoi pv. phaseolicola (strain 1448A / Race 6) (Pseudomonas syringae pv. phaseolicola (strain 1448A / Race 6)), this protein is NAD kinase.